The sequence spans 510 residues: Glutamate--tRNA ligase (510 aa).

The 'HIGH' region signature appears at 15-25; the sequence is PSPTGDPHVGT. Positions 256-260 match the 'KMSKS' region motif; the sequence is KISKR. Lys-259 contacts ATP.

This sequence belongs to the class-I aminoacyl-tRNA synthetase family. Glutamate--tRNA ligase type 1 subfamily. In terms of assembly, monomer.

The protein resides in the cytoplasm. The catalysed reaction is tRNA(Glu) + L-glutamate + ATP = L-glutamyl-tRNA(Glu) + AMP + diphosphate. In terms of biological role, catalyzes the attachment of glutamate to tRNA(Glu) in a two-step reaction: glutamate is first activated by ATP to form Glu-AMP and then transferred to the acceptor end of tRNA(Glu). In Fusobacterium nucleatum subsp. nucleatum (strain ATCC 25586 / DSM 15643 / BCRC 10681 / CIP 101130 / JCM 8532 / KCTC 2640 / LMG 13131 / VPI 4355), this protein is Glutamate--tRNA ligase.